The primary structure comprises 194 residues: ATP-dependent Clp protease proteolytic subunit (194 aa).

Serine 98 acts as the Nucleophile in catalysis. Histidine 123 is an active-site residue.

It belongs to the peptidase S14 family. Fourteen ClpP subunits assemble into 2 heptameric rings which stack back to back to give a disk-like structure with a central cavity, resembling the structure of eukaryotic proteasomes.

The protein localises to the cytoplasm. The enzyme catalyses Hydrolysis of proteins to small peptides in the presence of ATP and magnesium. alpha-casein is the usual test substrate. In the absence of ATP, only oligopeptides shorter than five residues are hydrolyzed (such as succinyl-Leu-Tyr-|-NHMec, and Leu-Tyr-Leu-|-Tyr-Trp, in which cleavage of the -Tyr-|-Leu- and -Tyr-|-Trp bonds also occurs).. In terms of biological role, cleaves peptides in various proteins in a process that requires ATP hydrolysis. Has a chymotrypsin-like activity. Plays a major role in the degradation of misfolded proteins. The chain is ATP-dependent Clp protease proteolytic subunit from Staphylococcus carnosus (strain TM300).